The sequence spans 193 residues: Dihydrofolate reductase (193 aa).

The DHFR domain maps to 1-193; it reads MIKLVFRYSP…VTTLTESVYK (193 aa). Residues Arg7, 22–27, 52–55, and 73–77 contribute to the NADP(+) site; these read FGLGDG, GAKT, and DLARD.

This sequence belongs to the dihydrofolate reductase family.

The enzyme catalyses (6S)-5,6,7,8-tetrahydrofolate + NADP(+) = 7,8-dihydrofolate + NADPH + H(+). Its pathway is cofactor biosynthesis; tetrahydrofolate biosynthesis; 5,6,7,8-tetrahydrofolate from 7,8-dihydrofolate: step 1/1. In terms of biological role, key enzyme in folate metabolism. Catalyzes an essential reaction for de novo glycine and purine synthesis, and for DNA precursor synthesis. This Escherichia coli (Bacteriophage T4) protein is Dihydrofolate reductase (frd).